The primary structure comprises 288 residues: Orotidine 5'-phosphate decarboxylase (288 aa).

The active-site Proton donor is the Lys-97.

This sequence belongs to the OMP decarboxylase family. Type 2 subfamily.

It carries out the reaction orotidine 5'-phosphate + H(+) = UMP + CO2. It functions in the pathway pyrimidine metabolism; UMP biosynthesis via de novo pathway; UMP from orotate: step 2/2. This Clostridium tetani (strain Massachusetts / E88) protein is Orotidine 5'-phosphate decarboxylase.